We begin with the raw amino-acid sequence, 88 residues long: UPF0367 protein Tery_1229 (88 aa).

The protein belongs to the UPF0367 family.

The sequence is that of UPF0367 protein Tery_1229 from Trichodesmium erythraeum (strain IMS101).